A 393-amino-acid polypeptide reads, in one-letter code: Dual specificity mitogen-activated protein kinase kinase 1 (393 aa).

The segment at 1–27 (MPKKKPTPIQLNPAPDGSAVNGTSSAE) is disordered. The Protein kinase domain occupies 68–361 (FEKISELGAG…LKQLMVHAFI (294 aa)). ATP-binding positions include 74-82 (LGAGNGGVV) and Lys-97. Asp-190 functions as the Proton acceptor in the catalytic mechanism. Phosphoserine; by RAF is present on residues Ser-218 and Ser-222. The segment at 270–307 (ELELMFGCQVEGDAAETPPRPRTPGRPLSSYGMDSRPP) is RAF1-binding. Thr-286 bears the Phosphothreonine mark. At Thr-292 the chain carries Phosphothreonine; by MAPK1. Ser-298 carries the phosphoserine; by PAK modification.

This sequence belongs to the protein kinase superfamily. STE Ser/Thr protein kinase family. MAP kinase kinase subfamily. In terms of assembly, found in a complex with at least BRAF, HRAS, MAP2K1, MAPK3/ERK1 and RGS14. Forms a heterodimer with MAP2K2/MEK2. Forms heterodimers with KSR2 which further dimerize to form tetramers. Interacts with KSR1 or KSR2 and BRAF; the interaction with KSR1 or KSR2 mediates KSR1-BRAF or KSR2-BRAF dimerization. Interacts with ARBB2, LAMTOR3, MAPK1/ERK2 and RAF1. Interacts with MAPK1/ERK2. Interacts with MORG1. Interacts with PPARG. Interacts with isoform 1 of VRK2. Interacts with SGK1. Interacts with BIRC6/bruce. Interacts with KAT7; the interaction promotes KAT7 phosphorylation. Interacts with RAF1 and NEK10; the interaction is required for ERK1/2-signaling pathway activation in response to UV irradiation. Interacts with TRAF3IP3. Interacts with MOS. Phosphorylation at Ser-218 and Ser-222 by MAP kinase kinase kinases (BRAF or MEKK1) positively regulates the kinase activity. Also phosphorylated at Thr-292 by MAPK1/ERK2 and at Ser-298 by PAK. MAPK1/ERK2 phosphorylation of Thr-292 occurs in response to cellular adhesion and leads to inhibition of Ser-298 phosphorylation by PAK. Autophosphorylated at Ser-218 and Ser-222, autophosphosphorylation is promoted by NEK10 following UV irradiation.

It is found in the cytoplasm. It localises to the cytoskeleton. Its subcellular location is the microtubule organizing center. The protein localises to the centrosome. The protein resides in the spindle pole body. It is found in the nucleus. It localises to the membrane. The enzyme catalyses L-seryl-[protein] + ATP = O-phospho-L-seryl-[protein] + ADP + H(+). It catalyses the reaction L-threonyl-[protein] + ATP = O-phospho-L-threonyl-[protein] + ADP + H(+). It carries out the reaction L-tyrosyl-[protein] + ATP = O-phospho-L-tyrosyl-[protein] + ADP + H(+). Ras proteins such as HRAS mediate the activation of RAF proteins such as RAF1 or BRAF which in turn activate extracellular signal-regulated kinases (ERK) through MAPK (mitogen-activated protein kinases) and ERK kinases MAP2K1/MEK1 and MAP2K2/MEK2. Activation occurs through phosphorylation of Ser-218 and Ser-222. MAP2K1/MEK1 binds KSR1 or KSR2 releasing the inhibitory intramolecular interaction between KSR1 or KSR2 protein kinase and N-terminal domains. This allows KSR1 or KSR2 dimerization with BRAF leading to BRAF activation and phosphorylation of MAP2K1. MAP2K1/MEK1 is also the target of negative feed-back regulation by its substrate kinases, such as MAPK1/ERK2. These phosphorylate MAP2K1/MEK1 on Thr-292, thereby facilitating dephosphorylation of the activating residues Ser-218 and Ser-222. Inhibited by serine/threonine phosphatase 2A. Dual specificity protein kinase which acts as an essential component of the MAP kinase signal transduction pathway. Binding of extracellular ligands such as growth factors, cytokines and hormones to their cell-surface receptors activates RAS and this initiates RAF1 activation. RAF1 then further activates the dual-specificity protein kinases MAP2K1/MEK1 and MAP2K2/MEK2. Both MAP2K1/MEK1 and MAP2K2/MEK2 function specifically in the MAPK/ERK cascade, and catalyze the concomitant phosphorylation of a threonine and a tyrosine residue in a Thr-Glu-Tyr sequence located in the extracellular signal-regulated kinases MAPK3/ERK1 and MAPK1/ERK2, leading to their activation and further transduction of the signal within the MAPK/ERK cascade. Activates BRAF in a KSR1 or KSR2-dependent manner; by binding to KSR1 or KSR2 releases the inhibitory intramolecular interaction between KSR1 or KSR2 protein kinase and N-terminal domains which promotes KSR1 or KSR2-BRAF dimerization and BRAF activation. Depending on the cellular context, this pathway mediates diverse biological functions such as cell growth, adhesion, survival and differentiation, predominantly through the regulation of transcription, metabolism and cytoskeletal rearrangements. One target of the MAPK/ERK cascade is peroxisome proliferator-activated receptor gamma (PPARG), a nuclear receptor that promotes differentiation and apoptosis. MAP2K1/MEK1 has been shown to export PPARG from the nucleus. The MAPK/ERK cascade is also involved in the regulation of endosomal dynamics, including lysosome processing and endosome cycling through the perinuclear recycling compartment (PNRC), as well as in the fragmentation of the Golgi apparatus during mitosis. This is Dual specificity mitogen-activated protein kinase kinase 1 (MAP2K1) from Pan troglodytes (Chimpanzee).